The following is a 530-amino-acid chain: Bifunctional purine biosynthesis protein PurH (530 aa).

The MGS-like domain occupies 1-148 (MNNARPIRRA…KNHKDVTIVV (148 aa)).

The protein belongs to the PurH family.

The catalysed reaction is (6R)-10-formyltetrahydrofolate + 5-amino-1-(5-phospho-beta-D-ribosyl)imidazole-4-carboxamide = 5-formamido-1-(5-phospho-D-ribosyl)imidazole-4-carboxamide + (6S)-5,6,7,8-tetrahydrofolate. It carries out the reaction IMP + H2O = 5-formamido-1-(5-phospho-D-ribosyl)imidazole-4-carboxamide. Its pathway is purine metabolism; IMP biosynthesis via de novo pathway; 5-formamido-1-(5-phospho-D-ribosyl)imidazole-4-carboxamide from 5-amino-1-(5-phospho-D-ribosyl)imidazole-4-carboxamide (10-formyl THF route): step 1/1. It functions in the pathway purine metabolism; IMP biosynthesis via de novo pathway; IMP from 5-formamido-1-(5-phospho-D-ribosyl)imidazole-4-carboxamide: step 1/1. This Aliivibrio fischeri (strain ATCC 700601 / ES114) (Vibrio fischeri) protein is Bifunctional purine biosynthesis protein PurH.